Reading from the N-terminus, the 188-residue chain is MKQQANLIRAGQVIEHDGRRWTVLKQQIITPGKGGAFIQVEMRDLKTGNKTNERWRTADTVERLMTDNRDYTYSYTDGDNLVLMDGETFEQFLVPAELLGDQAPFLQDNMAVIVDLVEGDPVGIHLPATVTLEIVEADPVVKGQTASSSYKPAKLSNGVKVMVPPFIEAGERIVVRTEDSTYVERAKG.

It belongs to the elongation factor P family.

It localises to the cytoplasm. It participates in protein biosynthesis; polypeptide chain elongation. Functionally, involved in peptide bond synthesis. Stimulates efficient translation and peptide-bond synthesis on native or reconstituted 70S ribosomes in vitro. Probably functions indirectly by altering the affinity of the ribosome for aminoacyl-tRNA, thus increasing their reactivity as acceptors for peptidyl transferase. This chain is Elongation factor P, found in Acidiphilium cryptum (strain JF-5).